A 137-amino-acid chain; its full sequence is Ribosome-binding factor A (137 aa).

Belongs to the RbfA family. Monomer. Binds 30S ribosomal subunits, but not 50S ribosomal subunits or 70S ribosomes.

It localises to the cytoplasm. In terms of biological role, one of several proteins that assist in the late maturation steps of the functional core of the 30S ribosomal subunit. Associates with free 30S ribosomal subunits (but not with 30S subunits that are part of 70S ribosomes or polysomes). Required for efficient processing of 16S rRNA. May interact with the 5'-terminal helix region of 16S rRNA. The polypeptide is Ribosome-binding factor A (Cereibacter sphaeroides (strain KD131 / KCTC 12085) (Rhodobacter sphaeroides)).